The primary structure comprises 992 residues: Protein translocase subunit SecA (992 aa).

Residues Gln-86, 104-108 (GEGKT), and Asp-535 each bind ATP. Positions 885–910 (IAGGSSEVEQTRKPQRRTVQQIGRND) are disordered. Cys-912, Cys-914, Cys-923, and His-924 together coordinate Zn(2+). The segment at 965–992 (IDNGTLPAASPKTPRGRQPQAVPRGKKR) is disordered.

Belongs to the SecA family. In terms of assembly, monomer and homodimer. Part of the essential Sec protein translocation apparatus which comprises SecA, SecYEG and auxiliary proteins SecDF. Other proteins may also be involved. The cofactor is Zn(2+).

The protein resides in the cell membrane. The protein localises to the cytoplasm. It catalyses the reaction ATP + H2O + cellular proteinSide 1 = ADP + phosphate + cellular proteinSide 2.. In terms of biological role, part of the Sec protein translocase complex. Interacts with the SecYEG preprotein conducting channel. Has a central role in coupling the hydrolysis of ATP to the transfer of proteins into and across the cell membrane, serving as an ATP-driven molecular motor driving the stepwise translocation of polypeptide chains across the membrane. This chain is Protein translocase subunit SecA, found in Chloroflexus aggregans (strain MD-66 / DSM 9485).